Here is a 64-residue protein sequence, read N- to C-terminus: Large ribosomal subunit protein eL37 (64 aa).

A C4-type zinc finger spans residues 1–6; that stretch reads GRCSAC. Positions 3 and 6 each coordinate Zn(2+).

This sequence belongs to the eukaryotic ribosomal protein eL37 family. It depends on Zn(2+) as a cofactor.

Binds to the 23S rRNA. The chain is Large ribosomal subunit protein eL37 (RPL37) from Solanum lycopersicum (Tomato).